A 98-amino-acid chain; its full sequence is Serine rich endogenous peptide 10 (98 aa).

The signal sequence occupies residues 1–29 (MERKKFSSKFIHLLIVFLLLCTFLSRTES). Positions 50–98 (NSAIGTPSSTSDHAPGSNGRKLMSIYRPNGDIFTGPSGSGHGGGRTPAP) are disordered. Over residues 52-61 (AIGTPSSTSD) the composition is skewed to polar residues. Short sequence motifs (SCOOP motif) lie at residues 52–66 (AIGT…APGS) and 80–94 (DIFT…GGGR). Short sequence motifs (sxS motif essential for MIK2 binding) lie at residues 58-60 (STS) and 86-88 (SGS). Positions 86-98 (SGSGHGGGRTPAP) are enriched in gly residues.

Belongs to the serine rich endogenous peptide (SCOOP) phytocytokine family. As to quaternary structure, interacts with MIK2 (via extracellular leucine-rich repeat domain); this interaction triggers the formation of complex between MIK2 and the BAK1/SERK3 and SERK4 coreceptors, and subsequent BAK1 activation by phosphorylation. As to expression, mostly expressed in leaves and seedlings shoots, to a lower extent, in roots, but barely in flowers.

The protein localises to the cell membrane. It is found in the secreted. The protein resides in the extracellular space. It localises to the apoplast. Its function is as follows. Brassicaceae-specific phytocytokine (plant endogenous peptide released into the apoplast) perceived by MIK2 in a BAK1/SERK3 and SERK4 coreceptors-dependent manner, that modulates various physiological and antimicrobial processes including growth prevention and reactive oxygen species (ROS) response regulation. Inhibits root growth and regulates root meristems. Promotes ROS production and MAPK (e.g. MPK3, MPK4 and MPK6) activation in a MIK2-dependent manner, thus leading to the up-regulation of immune-related marker genes (e.g. WRKY30, WRKY33 and CYP81F2). This chain is Serine rich endogenous peptide 10, found in Arabidopsis thaliana (Mouse-ear cress).